The chain runs to 127 residues: Fatty acid-binding protein, liver (127 aa).

Met-1 carries the post-translational modification N-acetylmethionine. At Ser-11 the chain carries Phosphoserine. N6-succinyllysine occurs at positions 31 and 36. Ser-39 is modified (phosphoserine). Lys-46 is modified (N6-succinyllysine). Phosphothreonine is present on Thr-51. Ser-56 carries the phosphoserine modification. 3 positions are modified to N6-succinyllysine: Lys-57, Lys-78, and Lys-90. A Phosphoserine modification is found at Ser-100. Lys-121 carries the post-translational modification N6-succinyllysine.

Belongs to the calycin superfamily. Fatty-acid binding protein (FABP) family. In terms of assembly, monomer.

The protein localises to the cytoplasm. Functionally, plays a role in lipoprotein-mediated cholesterol uptake in hepatocytes. Binds cholesterol. Binds free fatty acids and their coenzyme A derivatives, bilirubin, and some other small molecules in the cytoplasm. May be involved in intracellular lipid transport. In Sus scrofa (Pig), this protein is Fatty acid-binding protein, liver (FABP1).